We begin with the raw amino-acid sequence, 311 residues long: Peptide methionine sulfoxide reductase MsrA/MsrB 2 (311 aa).

Residues 1 to 155 are peptide methionine sulfoxide reductase A; it reads MHEIYLAGGC…PNGYCHINVN (155 aa). Residue cysteine 10 is part of the active site. In terms of domain architecture, MsrB spans 172-295; sequence DEELKKTLSP…NSLSIRFIPK (124 aa). Cysteine 284 acts as the Nucleophile in catalysis.

This sequence in the N-terminal section; belongs to the MsrA Met sulfoxide reductase family. In the C-terminal section; belongs to the MsrB Met sulfoxide reductase family.

The enzyme catalyses L-methionyl-[protein] + [thioredoxin]-disulfide + H2O = L-methionyl-(S)-S-oxide-[protein] + [thioredoxin]-dithiol. It carries out the reaction [thioredoxin]-disulfide + L-methionine + H2O = L-methionine (S)-S-oxide + [thioredoxin]-dithiol. It catalyses the reaction L-methionyl-[protein] + [thioredoxin]-disulfide + H2O = L-methionyl-(R)-S-oxide-[protein] + [thioredoxin]-dithiol. Has an important function as a repair enzyme for proteins that have been inactivated by oxidation. Catalyzes the reversible oxidation-reduction of methionine sulfoxide in proteins to methionine. The polypeptide is Peptide methionine sulfoxide reductase MsrA/MsrB 2 (msrAB2) (Streptococcus pneumoniae serotype 4 (strain ATCC BAA-334 / TIGR4)).